Here is a 251-residue protein sequence, read N- to C-terminus: uncharacterized protein (251 aa).

It belongs to the FAM243 family.

This is an uncharacterized protein from Mus musculus (Mouse).